The sequence spans 328 residues: 5'-AMP-activated protein kinase subunit gamma (328 aa).

4 consecutive CBS domains span residues 42–103 (VSYR…PDKF), 123–186 (IQPY…CKEI), 199–259 (ISTN…YNDL), and 268–328 (MRRS…FAES). Residues I47, R150, R151, 171–174 (TQYR), 227–228 (SS), and 297–299 (RVH) each bind ADP. Residue R150 coordinates AMP. R150 contributes to the ATP binding site. An AMP-binding site is contributed by 227–228 (SS). 227–228 (SS) is an ATP binding site. Residues R300 and 313–318 (VLTLSD) contribute to the ATP site. 315 to 318 (TLSD) provides a ligand contact to ADP. 315–318 (TLSD) lines the AMP pocket.

The protein belongs to the 5'-AMP-activated protein kinase gamma subunit family. AMPK is a heterotrimer of an alpha catalytic subunit, a beta and a gamma non-catalytic subunits.

The protein resides in the nucleus. Its subcellular location is the cytoplasm. Adenine nucleotides-binding subunit gamma of AMP-activated protein kinase (AMPK), an energy sensor protein kinase that plays a key role in regulating cellular energy metabolism. In response to reduction of intracellular ATP levels, AMPK activates energy-producing pathways and inhibits energy-consuming processes: inhibits protein, carbohydrate and lipid biosynthesis, as well as cell growth and proliferation. AMPK acts via direct phosphorylation of metabolic enzymes, and by longer-term effects via phosphorylation of transcription regulators. Gamma non-catalytic subunit mediates binding to AMP, ADP and ATP, leading to activate or inhibit AMPK: AMP-binding results in allosteric activation of alpha catalytic subunit (SNF1) both by inducing phosphorylation and preventing dephosphorylation of catalytic subunits. The protein is 5'-AMP-activated protein kinase subunit gamma (SNF4) of Kluyveromyces lactis (strain ATCC 8585 / CBS 2359 / DSM 70799 / NBRC 1267 / NRRL Y-1140 / WM37) (Yeast).